A 683-amino-acid polypeptide reads, in one-letter code: Methionine--tRNA ligase (683 aa).

The short motif at 15–25 (PYANGPIHLGH) is the 'HIGH' region element. Residues cysteine 146, cysteine 149, cysteine 159, and cysteine 162 each contribute to the Zn(2+) site. Residues 332-336 (KMSKS) carry the 'KMSKS' region motif. Residue lysine 335 participates in ATP binding. Residues 582 to 683 (DFAKIDLRIA…EGALPGMRVK (102 aa)) enclose the tRNA-binding domain.

This sequence belongs to the class-I aminoacyl-tRNA synthetase family. MetG type 1 subfamily. Homodimer. Requires Zn(2+) as cofactor.

It is found in the cytoplasm. The catalysed reaction is tRNA(Met) + L-methionine + ATP = L-methionyl-tRNA(Met) + AMP + diphosphate. In terms of biological role, is required not only for elongation of protein synthesis but also for the initiation of all mRNA translation through initiator tRNA(fMet) aminoacylation. This is Methionine--tRNA ligase from Shewanella frigidimarina (strain NCIMB 400).